A 182-amino-acid chain; its full sequence is Crossover junction endodeoxyribonuclease RuvC (182 aa).

Active-site residues include D7, E69, and D141. Mg(2+) contacts are provided by D7, E69, and D141.

Belongs to the RuvC family. Homodimer which binds Holliday junction (HJ) DNA. The HJ becomes 2-fold symmetrical on binding to RuvC with unstacked arms; it has a different conformation from HJ DNA in complex with RuvA. In the full resolvosome a probable DNA-RuvA(4)-RuvB(12)-RuvC(2) complex forms which resolves the HJ. Mg(2+) is required as a cofactor.

It localises to the cytoplasm. The catalysed reaction is Endonucleolytic cleavage at a junction such as a reciprocal single-stranded crossover between two homologous DNA duplexes (Holliday junction).. Its function is as follows. The RuvA-RuvB-RuvC complex processes Holliday junction (HJ) DNA during genetic recombination and DNA repair. Endonuclease that resolves HJ intermediates. Cleaves cruciform DNA by making single-stranded nicks across the HJ at symmetrical positions within the homologous arms, yielding a 5'-phosphate and a 3'-hydroxyl group; requires a central core of homology in the junction. The consensus cleavage sequence is 5'-(A/T)TT(C/G)-3'. Cleavage occurs on the 3'-side of the TT dinucleotide at the point of strand exchange. HJ branch migration catalyzed by RuvA-RuvB allows RuvC to scan DNA until it finds its consensus sequence, where it cleaves and resolves the cruciform DNA. This chain is Crossover junction endodeoxyribonuclease RuvC, found in Polaromonas sp. (strain JS666 / ATCC BAA-500).